Here is a 266-residue protein sequence, read N- to C-terminus: Apolipoprotein A-I (266 aa).

The first 18 residues, 1-18, serve as a signal peptide directing secretion; sequence MKAVVLTLAVLFLTGSQA. A run of 2 repeats spans residues 67-88 and 89-110. A 10 X approximate tandem repeats region spans residues 67–266; that stretch reads LKLLDNWDSL…DEAAKKLNTQ (200 aa). Methionine sulfoxide is present on methionine 109. The 3; half-length repeat unit spans residues 111 to 121; sequence KDLEEVKQKVQ. Tandem repeats lie at residues 122–143, 144–165, 166–187, 188–209, and 210–231. The stretch at 232–242 is one 9; half-length repeat; it reads PALEDLRQGLL. Copy 10 of the repeat occupies 243 to 266; the sequence is PVLESFKVSLLAAVDEAAKKLNTQ.

It belongs to the apolipoprotein A1/A4/E family. In terms of assembly, homodimer. Interacts with APOA1BP and CLU. Component of a sperm activating protein complex (SPAP), consisting of APOA1, an immunoglobulin heavy chain, an immunoglobulin light chain and albumin. Interacts with NDRG1. Interacts with SCGB3A2. Interacts with NAXE and YJEFN3. Glycosylated. In terms of processing, palmitoylated. Post-translationally, phosphorylation sites are present in the extracellular medium.

Its subcellular location is the secreted. Functionally, participates in the reverse transport of cholesterol from tissues to the liver for excretion by promoting cholesterol efflux from tissues and by acting as a cofactor for the lecithin cholesterol acyltransferase (LCAT). As part of the SPAP complex, activates spermatozoa motility. The protein is Apolipoprotein A-I (APOA1) of Mustela putorius furo (European domestic ferret).